The following is a 326-amino-acid chain: Heat-inducible transcription repressor HrcA (326 aa).

This sequence belongs to the HrcA family.

Its function is as follows. Negative regulator of class I heat shock genes (grpE-dnaK-dnaJ and groELS operons). Prevents heat-shock induction of these operons. This Staphylococcus saprophyticus subsp. saprophyticus (strain ATCC 15305 / DSM 20229 / NCIMB 8711 / NCTC 7292 / S-41) protein is Heat-inducible transcription repressor HrcA.